The chain runs to 431 residues: Peptidase B (431 aa).

2 residues coordinate Mn(2+): Lys-196 and Asp-201. Lys-208 is a catalytic residue. 3 residues coordinate Mn(2+): Asp-219, Asp-278, and Glu-280. Arg-282 is an active-site residue.

Belongs to the peptidase M17 family. Homohexamer. Requires Mn(2+) as cofactor.

It localises to the cytoplasm. It carries out the reaction Release of an N-terminal amino acid, Xaa, from a peptide or arylamide. Xaa is preferably Glu or Asp but may be other amino acids, including Leu, Met, His, Cys and Gln.. Functionally, probably plays an important role in intracellular peptide degradation. This chain is Peptidase B, found in Photorhabdus laumondii subsp. laumondii (strain DSM 15139 / CIP 105565 / TT01) (Photorhabdus luminescens subsp. laumondii).